The sequence spans 294 residues: 2-dehydro-3-deoxy-phosphogluconate/2-dehydro-3-deoxy-6-phosphogalactonate aldolase (294 aa).

Substrate contacts are provided by residues Thr-43–Thr-44, Tyr-130–Tyr-132, and Lys-155–Thr-157. The active-site Schiff-base intermediate with substrate is Lys-155.

It belongs to the DapA family. KDPG aldolase subfamily. Homotetramer; dimer of dimers.

The catalysed reaction is 2-dehydro-3-deoxy-6-phospho-D-gluconate = D-glyceraldehyde 3-phosphate + pyruvate. It catalyses the reaction 2-dehydro-3-deoxy-6-phospho-D-galactonate = D-glyceraldehyde 3-phosphate + pyruvate. It participates in carbohydrate acid metabolism; 2-dehydro-3-deoxy-D-gluconate degradation; D-glyceraldehyde 3-phosphate and pyruvate from 2-dehydro-3-deoxy-D-gluconate: step 2/2. Involved in the degradation of glucose and galactose via the Entner-Doudoroff pathway. Catalyzes the reversible cleavage of 2-keto-3-deoxy-6-phosphogluconate (KDPG) and 2-keto-3-deoxygluconate (KDG) forming pyruvate and glyceraldehyde 3-phosphate or glyceraldehyde, respectively. It is also able to catalyze the reversible cleavage of 2-keto-3-deoxy-6-phosphogalactonate (KDPGal) and 2-keto-3-deoxygalactonate (KDGal). It is equally active with both D- and L-glyceraldehyde. The chain is 2-dehydro-3-deoxy-phosphogluconate/2-dehydro-3-deoxy-6-phosphogalactonate aldolase from Saccharolobus solfataricus (Sulfolobus solfataricus).